The chain runs to 406 residues: 4-hydroxy-3-methylbut-2-en-1-yl diphosphate synthase (ferredoxin) (406 aa).

[4Fe-4S] cluster-binding residues include cysteine 315, cysteine 318, cysteine 349, and glutamate 356.

This sequence belongs to the IspG family. It depends on [4Fe-4S] cluster as a cofactor.

The enzyme catalyses (2E)-4-hydroxy-3-methylbut-2-enyl diphosphate + 2 oxidized [2Fe-2S]-[ferredoxin] + H2O = 2-C-methyl-D-erythritol 2,4-cyclic diphosphate + 2 reduced [2Fe-2S]-[ferredoxin] + H(+). It participates in isoprenoid biosynthesis; isopentenyl diphosphate biosynthesis via DXP pathway; isopentenyl diphosphate from 1-deoxy-D-xylulose 5-phosphate: step 5/6. Its function is as follows. Converts 2C-methyl-D-erythritol 2,4-cyclodiphosphate (ME-2,4cPP) into 1-hydroxy-2-methyl-2-(E)-butenyl 4-diphosphate. The chain is 4-hydroxy-3-methylbut-2-en-1-yl diphosphate synthase (ferredoxin) from Microcystis aeruginosa (strain NIES-843 / IAM M-2473).